The sequence spans 69 residues: Small archaeal modifier protein 2 (69 aa).

Residue K55 forms a Glycyl lysine isopeptide (Lys-Gly) (interchain with G-Cter in SAMP2) linkage. Residue G69 is modified to 1-thioglycine; alternate. The residue at position 69 (G69) is a Glycyl adenylate; alternate. G69 participates in a covalent cross-link: Glycyl lysine isopeptide (Gly-Lys) (interchain with K-? in acceptor proteins); alternate.

The C-terminal glycine is likely acyl-adenylated (-COAMP) by UbaA, and also probably thiocarboxylated (-COSH) to function in sulfur transfer.

Its function is as follows. Functions as a protein modifier covalently attached to lysine residues of substrate proteins, as well as a sulfur carrier in tRNA thiolation. The protein modification process is termed sampylation and involves the formation of an isopeptide bond between the SAMP2 C-terminal glycine carboxylate and the epsilon-amino group of lysine residues on target proteins. Is able to form polymeric chains with itself likely at Lys-55, similar to ubiquitin and other ubiquitin-like proteins. May serve as a proteolytic signal in the cell to target proteins for degradation by proteasomes. This Pyrococcus furiosus (strain ATCC 43587 / DSM 3638 / JCM 8422 / Vc1) protein is Small archaeal modifier protein 2.